Reading from the N-terminus, the 414-residue chain is Probable cell wall biosynthesis protein LcpB (414 aa).

The segment at 1–108 (MDSPGQGEIA…PPVIAGDGGR (108 aa)) is disordered. At 1–120 (MDSPGQGEIA…KAISFKPRGC (120 aa)) the chain is on the cytoplasmic side. Residues 9 to 23 (IARDSQGRPILDRYG) are compositionally biased toward basic and acidic residues. Residues 33-42 (RQTPPTPRTP) are compositionally biased toward pro residues. Residues 43–53 (PVNETRVYQPR) are compositionally biased toward low complexity. A compositionally biased stretch (pro residues) spans 54-80 (QTPPRQTPPRQTPPRQMPPRQTPPRQV). Residues 121-141 (LGTIAGVLAVGLVLVFVVTLW) form a helical membrane-spanning segment. Residues 142–414 (ADSKLNRVDA…GAEALFSSMR (273 aa)) lie on the Periplasmic side of the membrane.

It belongs to the LytR/CpsA/Psr (LCP) family.

The protein localises to the cell inner membrane. In Corynebacterium glutamicum (strain ATCC 13032 / DSM 20300 / JCM 1318 / BCRC 11384 / CCUG 27702 / LMG 3730 / NBRC 12168 / NCIMB 10025 / NRRL B-2784 / 534), this protein is Probable cell wall biosynthesis protein LcpB.